Reading from the N-terminus, the 424-residue chain is Anaerobic glycerol-3-phosphate dehydrogenase subunit B (424 aa).

Belongs to the anaerobic G-3-P dehydrogenase subunit B family. Composed of a catalytic GlpA/B dimer and of membrane bound GlpC. FMN is required as a cofactor.

The catalysed reaction is a quinone + sn-glycerol 3-phosphate = dihydroxyacetone phosphate + a quinol. The protein operates within polyol metabolism; glycerol degradation via glycerol kinase pathway; glycerone phosphate from sn-glycerol 3-phosphate (anaerobic route): step 1/1. In terms of biological role, conversion of glycerol 3-phosphate to dihydroxyacetone. Uses fumarate or nitrate as electron acceptor. This Yersinia pseudotuberculosis serotype I (strain IP32953) protein is Anaerobic glycerol-3-phosphate dehydrogenase subunit B.